The primary structure comprises 128 residues: Cytochrome c-type biogenesis protein CcmE (128 aa).

Residues 1–8 (MQKIVRNR) are Cytoplasmic-facing. Residues 9 to 29 (LIKIILCFCSTCLGISIILYN) traverse the membrane as a helical; Signal-anchor for type II membrane protein segment. Topologically, residues 30–128 (LEKNIIFFFP…KHDENYRPPS (99 aa)) are periplasmic. Residues histidine 120 and tyrosine 124 each contribute to the heme site.

The protein belongs to the CcmE/CycJ family.

The protein resides in the cell inner membrane. Heme chaperone required for the biogenesis of c-type cytochromes. Transiently binds heme delivered by CcmC and transfers the heme to apo-cytochromes in a process facilitated by CcmF and CcmH. This is Cytochrome c-type biogenesis protein CcmE from Rickettsia typhi (strain ATCC VR-144 / Wilmington).